Consider the following 287-residue polypeptide: tRNA uridine(34) hydroxylase (287 aa).

The region spanning 132–226 (EGRPVVMLDT…YFEEVGGAHY (95 aa)) is the Rhodanese domain. The Cysteine persulfide intermediate role is filled by Cys-186.

The protein belongs to the TrhO family.

It catalyses the reaction uridine(34) in tRNA + AH2 + O2 = 5-hydroxyuridine(34) in tRNA + A + H2O. In terms of biological role, catalyzes oxygen-dependent 5-hydroxyuridine (ho5U) modification at position 34 in tRNAs. This Paraburkholderia xenovorans (strain LB400) protein is tRNA uridine(34) hydroxylase.